A 115-amino-acid chain; its full sequence is Large ribosomal subunit protein bL20 (115 aa).

This sequence belongs to the bacterial ribosomal protein bL20 family.

In terms of biological role, binds directly to 23S ribosomal RNA and is necessary for the in vitro assembly process of the 50S ribosomal subunit. It is not involved in the protein synthesizing functions of that subunit. The sequence is that of Large ribosomal subunit protein bL20 from Prochlorococcus marinus (strain MIT 9313).